The following is an 88-amino-acid chain: Small ribosomal subunit protein bS20 (88 aa).

A disordered region spans residues 1-26 (MANTAQARKRARQNTKRRQNSASQRS). The segment covering 7-19 (ARKRARQNTKRRQ) has biased composition (basic residues).

It belongs to the bacterial ribosomal protein bS20 family.

Binds directly to 16S ribosomal RNA. In Psychrobacter cryohalolentis (strain ATCC BAA-1226 / DSM 17306 / VKM B-2378 / K5), this protein is Small ribosomal subunit protein bS20.